The following is a 189-amino-acid chain: Blue copper protein (189 aa).

An N-terminal signal peptide occupies residues 1–24 (MAFSNALVLCFLLAIINMALPSLA). The region spanning 25–124 (TVYTVGDTSG…GMKLSIKVKA (100 aa)) is the Phytocyanin domain. Residues histidine 65, cysteine 106, and histidine 111 each coordinate Cu cation. Cysteine 78 and cysteine 106 are oxidised to a cystine. The span at 127 to 160 (GSSAAPSATPSSSGKGSPSSDDTPAATTTTTTPT) shows a compositional bias: low complexity. Positions 127–165 (GSSAAPSATPSSSGKGSPSSDDTPAATTTTTTPTKQNES) are disordered. The N-linked (GlcNAc...) asparagine glycan is linked to asparagine 163.

The sequence is that of Blue copper protein from Pisum sativum (Garden pea).